Here is a 203-residue protein sequence, read N- to C-terminus: Probable deoxycytidylate deaminase (203 aa).

One can recognise a CMP/dCMP-type deaminase domain in the interval 27–163 (HWDDYFMATS…PTYRASKRML (137 aa)). Residue histidine 102 coordinates Zn(2+). The active-site Proton donor is the glutamate 104. The Zn(2+) site is built by cysteine 128 and cysteine 131.

Belongs to the cytidine and deoxycytidylate deaminase family. Zn(2+) serves as cofactor.

The catalysed reaction is dCMP + H2O + H(+) = dUMP + NH4(+). Its function is as follows. Supplies the nucleotide substrate for thymidylate synthetase. The chain is Probable deoxycytidylate deaminase from Drosophila melanogaster (Fruit fly).